The sequence spans 105 residues: Endogenous retrovirus group K member 8 Rec protein (105 aa).

A disordered region spans residues 1-48; that stretch reads MNPSEMQRKAPPRRRRHRNRAPLTHKMNKMVTSEEQMKLPSTKKAEPP. Basic residues predominate over residues 10–20; the sequence is APPRRRRHRNR. The Nuclear localization signal signature appears at 13–20; it reads RRRRHRNR. The Nuclear export signal motif lies at 50–59; the sequence is WAQLKKLTQL.

Forms homodimers, homotrimers, and homotetramers via a C-terminal domain. Associates with XPO1 and with ZNF145.

It is found in the cytoplasm. Its subcellular location is the nucleus. The protein localises to the nucleolus. Functionally, retroviral replication requires the nuclear export and translation of unspliced, singly-spliced and multiply-spliced derivatives of the initial genomic transcript. Rec interacts with a highly structured RNA element (RcRE) present in the viral 3'LTR and recruits the cellular nuclear export machinery. This permits export to the cytoplasm of unspliced genomic or incompletely spliced subgenomic viral transcripts. The protein is Endogenous retrovirus group K member 8 Rec protein (ERVK-8) of Homo sapiens (Human).